The primary structure comprises 615 residues: Medium-chain acyl-CoA ligase ACSF2, mitochondrial (615 aa).

The N-terminal 42 residues, 1–42 (MAVYVGMLRVARLCARSPRVLGARVGLSRVWQEARLWGVRPL), are a transit peptide targeting the mitochondrion. Position 179 is an N6-acetyllysine (lysine 179). Residue lysine 182 is modified to N6-acetyllysine; alternate. An N6-succinyllysine; alternate modification is found at lysine 182. At lysine 199 the chain carries N6-acetyllysine. Position 263 to 271 (263 to 271 (TSGTTGSPK)) interacts with ATP. N6-acetyllysine is present on residues lysine 340 and lysine 398. Lysine 478 is modified (N6-succinyllysine). Residues aspartate 493 and arginine 508 each coordinate ATP. Lysine 510 bears the N6-acetyllysine mark. 2 positions are modified to N6-acetyllysine; alternate: lysine 544 and lysine 570. N6-succinyllysine; alternate occurs at positions 544 and 570. ATP is bound at residue lysine 599. Lysine 599 is subject to N6-succinyllysine.

The protein belongs to the ATP-dependent AMP-binding enzyme family.

Its subcellular location is the mitochondrion. The catalysed reaction is a medium-chain fatty acid + ATP + CoA = a medium-chain fatty acyl-CoA + AMP + diphosphate. It carries out the reaction octanoate + ATP + CoA = octanoyl-CoA + AMP + diphosphate. Functionally, acyl-CoA synthases catalyze the initial reaction in fatty acid metabolism, by forming a thioester with CoA. Has some preference toward medium-chain substrates. Plays a role in adipocyte differentiation. In Bos taurus (Bovine), this protein is Medium-chain acyl-CoA ligase ACSF2, mitochondrial.